Consider the following 284-residue polypeptide: Two-pore potassium channel 4 (284 aa).

Residues 1-21 (MEEENLLNENLLHPNESSPEE) form a disordered region. The Cytoplasmic segment spans residues 1 to 31 (MEEENLLNENLLHPNESSPEETQVTTVSKSK). A helical transmembrane segment spans residues 32 to 52 (WTILVLAMILLLVYLTFGVCT). The segment at residues 70–89 (DAFYFSIVTFSTVGYGDIVP) is an intramembrane region (pore-forming). A helical transmembrane segment spans residues 93 to 113 (TTKILTIVLVSTGVVFLDYLL). Residues 114 to 156 (NRVVSHVLSLQENAILDRINKTRNRAIRDHIAEDGKIRLKWKL) lie on the Cytoplasmic side of the membrane. A helical membrane pass occupies residues 157 to 177 (CLAFCAVGLCVGSGALFLHVF). Positions 184–203 (DSVYLSVISVTTVGYGDKTF) form an intramembrane region, pore-forming. Residues 211 to 231 (FAVFWLLLSTIAMATLFLYLA) form a helical membrane-spanning segment. Residues 232–284 (EMRIDRTTVMKLPPSESEFIVFKLRESGRISEDDIKQIVREFENLEEVPSSGS) lie on the Cytoplasmic side of the membrane.

This sequence belongs to the two pore domain potassium channel (TC 1.A.1.7) family. Homodimer. As to expression, predominantly expressed in pollen.

The protein localises to the cell membrane. Functionally, voltage-independent, instantaneously activating, potassium-selective plasma membrane ion channel. Open rectifier. Regulated by cytoplasmic pH and extra-cellular calcium. Has some permeability for Rb(+) and NH(4)(+), but none for Na(+) or Li(+). This Arabidopsis thaliana (Mouse-ear cress) protein is Two-pore potassium channel 4 (TPK4).